Reading from the N-terminus, the 272-residue chain is Secretagogin (272 aa).

EF-hand domains are found at residues 8-43 (LDAAGFLQIWQHFDADDNGYIEGKELDDFFRHMLKK), 53-89 (ERVQQIKKSFMSAYDATFDGRLQIEELANMILPQEEN), 101-136 (DNSVEFMKIWRKYDADSSGYISAAELKNFLKDLFLQ), 145-180 (KLDEYTDAMMKIFDKNKDGRLDLNDLARILALQENF), 193-228 (ERKRDFEKIFAHYDVSRTGALEGPEVDGFVKDMMEL), and 237-272 (DLDKFRECLLTHCDMNKDGKIQKSELALCLGLKHKP). Positions 21, 23, 25, 27, and 32 each coordinate Ca(2+). Positions 114, 116, 118, 120, 125, 158, 160, 162, 164, 169, 206, 208, 210, 217, 250, 252, 254, 256, and 261 each coordinate Ca(2+).

The protein resides in the cytoplasm. The protein is Secretagogin (scgn) of Danio rerio (Zebrafish).